Consider the following 106-residue polypeptide: Immunoglobulin lambda constant 3 (106 aa).

The Ig-like domain occupies 7-101 (PSVTLFPPSS…EGSTVEKTVA (95 aa)). Cysteine 28 and cysteine 87 are disulfide-bonded.

In terms of assembly, immunoglobulins are composed of two identical heavy chains and two identical light chains; disulfide-linked.

The protein localises to the secreted. It is found in the cell membrane. Constant region of immunoglobulin light chains. Immunoglobulins, also known as antibodies, are membrane-bound or secreted glycoproteins produced by B lymphocytes. In the recognition phase of humoral immunity, the membrane-bound immunoglobulins serve as receptors which, upon binding of a specific antigen, trigger the clonal expansion and differentiation of B lymphocytes into immunoglobulins-secreting plasma cells. Secreted immunoglobulins mediate the effector phase of humoral immunity, which results in the elimination of bound antigens. The antigen binding site is formed by the variable domain of one heavy chain, together with that of its associated light chain. Thus, each immunoglobulin has two antigen binding sites with remarkable affinity for a particular antigen. The variable domains are assembled by a process called V-(D)-J rearrangement and can then be subjected to somatic hypermutations which, after exposure to antigen and selection, allow affinity maturation for a particular antigen. This chain is Immunoglobulin lambda constant 3, found in Homo sapiens (Human).